The primary structure comprises 272 residues: tRNA pseudouridine synthase B (272 aa).

Residue Asp-38 is the Nucleophile of the active site.

Belongs to the pseudouridine synthase TruB family. Type 1 subfamily.

The enzyme catalyses uridine(55) in tRNA = pseudouridine(55) in tRNA. Functionally, responsible for synthesis of pseudouridine from uracil-55 in the psi GC loop of transfer RNAs. The protein is tRNA pseudouridine synthase B of Campylobacter jejuni (strain RM1221).